The sequence spans 178 residues: ATP-dependent protease subunit HslV (178 aa).

Residue Thr7 is part of the active site. Na(+)-binding residues include Gly162, Cys165, and Thr168.

Belongs to the peptidase T1B family. HslV subfamily. In terms of assembly, a double ring-shaped homohexamer of HslV is capped on each side by a ring-shaped HslU homohexamer. The assembly of the HslU/HslV complex is dependent on binding of ATP.

The protein localises to the cytoplasm. The enzyme catalyses ATP-dependent cleavage of peptide bonds with broad specificity.. Allosterically activated by HslU binding. Functionally, protease subunit of a proteasome-like degradation complex believed to be a general protein degrading machinery. This Burkholderia multivorans (strain ATCC 17616 / 249) protein is ATP-dependent protease subunit HslV.